Here is a 457-residue protein sequence, read N- to C-terminus: MPPVPLLRLQCGVNSYDWGKVGHESAAAKYAATTAASDFSIQSDKPYAELWMGTHPSLPSKDLETQRTLLDMVQDNQALISQEVSERYGGKLPFLFKVLSIRKALSIQAHPNKKLAEKLHARDPRNYPDDNHKPEMTIAITPFEGLCGFRPLVEIIHFLKAVAPLRQLVGERAASEFENTVKGSEESEDPAVTEKNKQALRTLFTSLMRSSPESIEAATKELVAIAQNSPETFTTSSSTPETNPTNPAELAAITVRLNGQFPNDIGSFVFFFLNFVKLEPGEAMFLKADDIHAYISGDIIECMASSDNVVRAGFTPKFKDVDTLVDMLTYSYAPIAEQKLEPTDYPYAVLNAPAYSSGSSCILYDPPIEEFSVVKTDLKRQGAKATFDGISGPSIVICTAGAGKITVGPKTEEVNEGYVFFVGANAECIIESTGEDTFTTFKAFCDLTGKEDMVNGN.

Zn(2+)-binding residues include glutamine 108, histidine 110, glutamate 135, and histidine 292. Arginine 311 is a catalytic residue.

The protein belongs to the mannose-6-phosphate isomerase type 1 family. Requires Zn(2+) as cofactor.

It localises to the cytoplasm. It catalyses the reaction D-mannose 6-phosphate = D-fructose 6-phosphate. It functions in the pathway nucleotide-sugar biosynthesis; GDP-alpha-D-mannose biosynthesis; alpha-D-mannose 1-phosphate from D-fructose 6-phosphate: step 1/2. In terms of biological role, involved in the synthesis of the GDP-mannose and dolichol-phosphate-mannose required for a number of critical mannosyl transfer reactions. This chain is Mannose-6-phosphate isomerase (pmi1), found in Aspergillus fumigatus (strain ATCC MYA-4609 / CBS 101355 / FGSC A1100 / Af293) (Neosartorya fumigata).